A 206-amino-acid chain; its full sequence is Large ribosomal subunit protein uL3 (206 aa).

The tract at residues 127–151 is disordered; the sequence is SGGPSSHGSKFHRHLGGTGQATTPA.

This sequence belongs to the universal ribosomal protein uL3 family. As to quaternary structure, part of the 50S ribosomal subunit. Forms a cluster with proteins L14 and L19.

In terms of biological role, one of the primary rRNA binding proteins, it binds directly near the 3'-end of the 23S rRNA, where it nucleates assembly of the 50S subunit. This is Large ribosomal subunit protein uL3 from Borrelia garinii subsp. bavariensis (strain ATCC BAA-2496 / DSM 23469 / PBi) (Borreliella bavariensis).